Consider the following 37-residue polypeptide: TVTCGQVASALSPCIDYLQKDGAVPAGSCCXKXLSSA.

Belongs to the plant LTP family.

It is found in the secreted. Functionally, plant non-specific lipid-transfer proteins transfer phospholipids as well as galactolipids across membranes. May play a role in wax or cutin deposition in the cell walls of expanding epidermal cells and certain secretory tissues. The polypeptide is Non-specific lipid-transfer protein P4 (Vitis sp. (Grape)).